Reading from the N-terminus, the 384-residue chain is Mitogen-activated protein kinase 8 (384 aa).

In terms of domain architecture, Protein kinase spans 26-321 (YQNLKPIGSG…VDEALQHPYI (296 aa)). Residues 32-40 (IGSGAQGIV) and Lys55 contribute to the ATP site. Position 116 is an S-nitrosocysteine (Cys116). The active-site Proton acceptor is the Asp151. Thr183 carries the post-translational modification Phosphothreonine; by MAP2K7. A TXY motif is present at residues 183–185 (TPY). Tyr185 carries the post-translational modification Phosphotyrosine; by MAP2K4. A Phosphoserine modification is found at Ser377.

This sequence belongs to the protein kinase superfamily. CMGC Ser/Thr protein kinase family. MAP kinase subfamily. In terms of assembly, binds to at least four scaffolding proteins, MAPK8IP1/JIP-1, MAPK8IP2/JIP-2, MAPK8IP3/JIP-3/JSAP1 and SPAG9/MAPK8IP4/JIP-4. These proteins also bind other components of the JNK signaling pathway. Forms a complex with MAPK8IP1 and ARHGEF28. Interacts with TP53 and WWOX. Interacts with JAMP. Interacts with NFATC4. Interacts with MECOM; regulates JNK signaling. Interacts with PIN1; this interaction mediates MAPK8 conformational changes leading to the binding of MAPK8 to its substrates. Interacts with HSF1 (via D domain and preferentially with hyperphosphorylated form); this interaction occurs under both normal growth conditions and immediately upon heat shock. Interacts (phosphorylated form) with NFE2; the interaction phosphorylates NFE2 in undifferentiated cells. Interacts with GRIPAP1. Interacts with POU5F1; phosphorylates POU5F1 at 'Ser-347'. Found in a complex with SH3RF1, RAC1, MAP3K11/MLK3, MAP2K7/MKK7 and MAPK8IP1/JIP1. Found in a complex with SH3RF1, RAC2, MAP3K7/TAK1, MAP2K7/MKK7, MAPK8IP1/JIP1 and MAPK9/JNK2. The cofactor is Mg(2+). In terms of processing, phosphorylated by TAOK2. Dually phosphorylated on Thr-183 and Tyr-185 by MAP2K7 and MAP2K4, which activates the enzyme. May be phosphorylated at Thr-183 and Tyr-185 by MAP3K1/MEKK1. Phosphorylated form is more concentrated at synapses than none-phosphorylated. In terms of tissue distribution, brain (at protein level).

The protein localises to the cytoplasm. It localises to the nucleus. The protein resides in the synapse. The catalysed reaction is L-seryl-[protein] + ATP = O-phospho-L-seryl-[protein] + ADP + H(+). The enzyme catalyses L-threonyl-[protein] + ATP = O-phospho-L-threonyl-[protein] + ADP + H(+). Inhibited by SERPINB3. Activated by threonine and tyrosine phosphorylation by either of two dual specificity kinases, MAP2K4 and MAP2K7. MAP2K4 shows a strong preference for Tyr-185 while MAP2K7 phosphorylates Tyr-183 preferentially. Inhibited by dual specificity phosphatases, such as DUSP1. In terms of biological role, serine/threonine-protein kinase involved in various processes such as cell proliferation, differentiation, migration, transformation and programmed cell death. Extracellular stimuli such as pro-inflammatory cytokines or physical stress stimulate the stress-activated protein kinase/c-Jun N-terminal kinase (SAP/JNK) signaling pathway. In this cascade, two dual specificity kinases MAP2K4/MKK4 and MAP2K7/MKK7 phosphorylate and activate MAPK8/JNK1. In turn, MAPK8/JNK1 phosphorylates a number of transcription factors, primarily components of AP-1 such as JUN, JDP2 and ATF2 and thus regulates AP-1 transcriptional activity. Phosphorylates the replication licensing factor CDT1, inhibiting the interaction between CDT1 and the histone H4 acetylase HBO1 to replication origins. Loss of this interaction abrogates the acetylation required for replication initiation. Promotes stressed cell apoptosis by phosphorylating key regulatory factors including p53/TP53 and Yes-associates protein YAP1. In T-cells, MAPK8 and MAPK9 are required for polarized differentiation of T-helper cells into Th1 cells. Contributes to the survival of erythroid cells by phosphorylating the antagonist of cell death BAD upon EPO stimulation. Mediates starvation-induced BCL2 phosphorylation, BCL2 dissociation from BECN1, and thus activation of autophagy. Phosphorylates STMN2 and hence regulates microtubule dynamics, controlling neurite elongation in cortical neurons. In the developing brain, through its cytoplasmic activity on STMN2, negatively regulates the rate of exit from multipolar stage and of radial migration from the ventricular zone. Phosphorylates several other substrates including heat shock factor protein 4 (HSF4), the deacetylase SIRT1, ELK1, or the E3 ligase ITCH. Phosphorylates the CLOCK-BMAL1 heterodimer and plays a role in the regulation of the circadian clock. Phosphorylates the heat shock transcription factor HSF1, suppressing HSF1-induced transcriptional activity. Phosphorylates POU5F1, which results in the inhibition of POU5F1's transcriptional activity and enhances its proteasomal degradation. Phosphorylates JUND and this phosphorylation is inhibited in the presence of MEN1. In neurons, phosphorylates SYT4 which captures neuronal dense core vesicles at synapses. Phosphorylates EIF4ENIF1/4-ET in response to oxidative stress, promoting P-body assembly. Phosphorylates SIRT6 in response to oxidative stress, stimulating its mono-ADP-ribosyltransferase activity. Phosphorylates NLRP3, promoting assembly of the NLRP3 inflammasome. Phosphorylates ALKBH5 in response to reactive oxygen species (ROS), promoting ALKBH5 sumoylation and inactivation. In Mus musculus (Mouse), this protein is Mitogen-activated protein kinase 8 (Mapk8).